The following is a 279-amino-acid chain: DegV domain-containing protein SA1258 (279 aa).

A DegV domain is found at 4–278 (QIIVTDSTSD…QGAIGLVVLK (275 aa)). The hexadecanoate site is built by threonine 61 and serine 93.

In terms of biological role, may bind long-chain fatty acids, such as palmitate, and may play a role in lipid transport or fatty acid metabolism. The protein is DegV domain-containing protein SA1258 of Staphylococcus aureus (strain N315).